Reading from the N-terminus, the 75-residue chain is Small ribosomal subunit protein bS21B (75 aa).

Basic and acidic residues predominate over residues 33-52 (RRSYEKPSERRAREKAEAVR). Residues 33–75 (RRSYEKPSERRAREKAEAVRRARKLARKQAQREGLLPGKKRAA) are disordered.

Belongs to the bacterial ribosomal protein bS21 family.

This Chelativorans sp. (strain BNC1) protein is Small ribosomal subunit protein bS21B.